The sequence spans 551 residues: DEAD-box ATP-dependent RNA helicase 47, mitochondrial (551 aa).

The transit peptide at methionine 1 to threonine 29 directs the protein to the mitochondrion. The Q motif motif lies at lysine 110–serine 138. Positions valine 141–valine 340 constitute a Helicase ATP-binding domain. ATP is bound at residue serine 154–threonine 161. Residues aspartate 274 to aspartate 277 carry the DEAD box motif. Residues threonine 397–alanine 548 enclose the Helicase C-terminal domain.

Belongs to the DEAD box helicase family. As to expression, mostly expressed in leaves and flowers, and, to a lower extent, in roots, seedlings and siliques, especially in meristematic regions.

It localises to the mitochondrion. It carries out the reaction ATP + H2O = ADP + phosphate + H(+). Essential protein required during embryogenesis. Required for mitochondrial metabolism. Necessary for normal plasmodesmata (PD) development and aperture regulation. This is DEAD-box ATP-dependent RNA helicase 47, mitochondrial (RH47) from Arabidopsis thaliana (Mouse-ear cress).